The primary structure comprises 192 residues: Crossover junction endodeoxyribonuclease RuvC (192 aa).

Catalysis depends on residues D9, E70, and D143. Positions 9, 70, and 143 each coordinate Mg(2+). The interval 161 to 192 (GASVATTGPGSSSLTPAQRAWAEAEAKARRAR) is disordered. The segment covering 163 to 176 (SVATTGPGSSSLTP) has biased composition (polar residues). Over residues 182–192 (AEAEAKARRAR) the composition is skewed to basic and acidic residues.

Belongs to the RuvC family. In terms of assembly, homodimer which binds Holliday junction (HJ) DNA. The HJ becomes 2-fold symmetrical on binding to RuvC with unstacked arms; it has a different conformation from HJ DNA in complex with RuvA. In the full resolvosome a probable DNA-RuvA(4)-RuvB(12)-RuvC(2) complex forms which resolves the HJ. It depends on Mg(2+) as a cofactor.

The protein resides in the cytoplasm. The enzyme catalyses Endonucleolytic cleavage at a junction such as a reciprocal single-stranded crossover between two homologous DNA duplexes (Holliday junction).. Functionally, the RuvA-RuvB-RuvC complex processes Holliday junction (HJ) DNA during genetic recombination and DNA repair. Endonuclease that resolves HJ intermediates. Cleaves cruciform DNA by making single-stranded nicks across the HJ at symmetrical positions within the homologous arms, yielding a 5'-phosphate and a 3'-hydroxyl group; requires a central core of homology in the junction. The consensus cleavage sequence is 5'-(A/T)TT(C/G)-3'. Cleavage occurs on the 3'-side of the TT dinucleotide at the point of strand exchange. HJ branch migration catalyzed by RuvA-RuvB allows RuvC to scan DNA until it finds its consensus sequence, where it cleaves and resolves the cruciform DNA. The protein is Crossover junction endodeoxyribonuclease RuvC of Pseudarthrobacter chlorophenolicus (strain ATCC 700700 / DSM 12829 / CIP 107037 / JCM 12360 / KCTC 9906 / NCIMB 13794 / A6) (Arthrobacter chlorophenolicus).